Reading from the N-terminus, the 415-residue chain is Meiotic driver wtf36 (415 aa).

Disordered stretches follow at residues 1–49 (MKNK…DLNN) and 67–99 (TTPP…SGTA). A compositionally biased stretch (basic and acidic residues) spans 11–29 (SMDEMSAKNDNEIDLEKGP). The next 7 membrane-spanning stretches (helical) occupy residues 105-125 (FLIK…PAVC), 142-162 (WTLF…LTYF), 169-189 (AVKV…IFLA), 205-225 (VTAI…AQCV), 240-260 (VVII…RSKF), 274-294 (CSIS…FWTL), and 298-318 (FSGL…TKGL).

This sequence belongs to the WTF family. In terms of assembly, homomer. Forms protein aggregates. The two isoforms can interact with each other and with themselves. High sequence similarity is required for their interaction.

The protein localises to the spore membrane. It localises to the vacuole membrane. It is found in the ascus epiplasm. Its subcellular location is the cytoplasm. The protein resides in the endoplasmic reticulum membrane. Functionally, promotes unequal transmission of alleles from the parental zygote to progeny spores by acting as poison/antidote system where the poison and antidote proteins are produced from the same locus; the poison component is trans-acting and targets all spores within an ascus whereas the antidote component is spore-specific, leading to poisoning of all progeny that do not inherit the allele. Its function is as follows. Localizes isoform 2 to the vacuole thereby facilitating its degradation. Forms toxic aggregates that disrupt spore maturation. This is Meiotic driver wtf36 from Schizosaccharomyces pombe (Fission yeast).